Reading from the N-terminus, the 542-residue chain is MARYVFITGGVVSSLGKGIAAAALGALLQARGYRVRLRKLDPYLNVDPGTMSPTQHGEVFVTDDGAETDLDLGHYERFTGRSATRTDNITTGRIYKNIIDKERRGDYLGATVQVIPHVTNEIKDFVTEGNQDYDFVICEIGGTVGDIEAMPFMEAIRQLGNDLPRGTAVYVHLTLMPYIPAAGELKTKPTQHSVKELQALGIHPDILLVRADREIPEAERRKLSLFCNVRPSAVIQALDVANIYDVPMAYHKEGLDDEVLAAFGIEPAPKPRLDQWEEVCNRIRTPEGEVTIAIVGKYTGLKDAYKSLIEALHHGGIANRVKVKLEWIESEVFEKEDPAPYLEKVHGILVPGGFGERGSEGKIHAARFARERKVPYFGICFGMQMAVIEAARNLADVPDASSTEFGPAKEPVVGLMTEWVKGNELQKRTAAGDLGGTMRLGAYKAALKKGTKISDIYGSTDISERHRHRYEVNIDYKDRLESCGLVFSGMSPDGVLPETIEYPDHPWFIGVQYHPELKSRPLDPHPLFASFIEAATEQSRLV.

The tract at residues 1-265 (MARYVFITGG…DDEVLAAFGI (265 aa)) is amidoligase domain. Ser13 lines the CTP pocket. Ser13 contacts UTP. ATP is bound by residues 14-19 (SLGKGI) and Asp71. Asp71 and Glu139 together coordinate Mg(2+). Residues 146-148 (DIE), 186-191 (KTKPTQ), and Lys222 contribute to the CTP site. UTP is bound by residues 186–191 (KTKPTQ) and Lys222. The region spanning 291–541 (TIAIVGKYTG…IEAATEQSRL (251 aa)) is the Glutamine amidotransferase type-1 domain. Position 353 (Gly353) interacts with L-glutamine. Cys380 acts as the Nucleophile; for glutamine hydrolysis in catalysis. L-glutamine contacts are provided by residues 381 to 384 (FGMQ), Glu404, and Arg469. Residues His514 and Glu516 contribute to the active site.

This sequence belongs to the CTP synthase family. In terms of assembly, homotetramer.

It catalyses the reaction UTP + L-glutamine + ATP + H2O = CTP + L-glutamate + ADP + phosphate + 2 H(+). The enzyme catalyses L-glutamine + H2O = L-glutamate + NH4(+). It carries out the reaction UTP + NH4(+) + ATP = CTP + ADP + phosphate + 2 H(+). Its pathway is pyrimidine metabolism; CTP biosynthesis via de novo pathway; CTP from UDP: step 2/2. Its activity is regulated as follows. Allosterically activated by GTP, when glutamine is the substrate; GTP has no effect on the reaction when ammonia is the substrate. The allosteric effector GTP functions by stabilizing the protein conformation that binds the tetrahedral intermediate(s) formed during glutamine hydrolysis. Inhibited by the product CTP, via allosteric rather than competitive inhibition. Functionally, catalyzes the ATP-dependent amination of UTP to CTP with either L-glutamine or ammonia as the source of nitrogen. Regulates intracellular CTP levels through interactions with the four ribonucleotide triphosphates. The sequence is that of CTP synthase from Rhizobium etli (strain ATCC 51251 / DSM 11541 / JCM 21823 / NBRC 15573 / CFN 42).